The chain runs to 143 residues: Snake venom vascular endothelial growth factor toxin (143 aa).

The signal sequence occupies residues 1–24 (MAAYLLAVAILFCIQGWPSATVQG). A Pyrrolidone carboxylic acid modification is found at Q25. Intrachain disulfides connect C38/C80, C69/C115, and C73/C117. Residues 115–143 (CECRPRSPGDVNNGRNPEEGEPRARFPFV) form a disordered region. A compositionally biased stretch (basic and acidic residues) spans 130–143 (NPEEGEPRARFPFV).

Belongs to the PDGF/VEGF growth factor family. Snake venom VEGF subfamily. In terms of assembly, homodimer; disulfide-linked. Interacts with VEGF receptor-2 (KDR). In terms of processing, the N-terminus is blocked for N-terminal sequencing, suggesting a Pyrrolidone carboxylic acid at Gln-25. Expressed by the venom gland.

The protein resides in the secreted. Its function is as follows. Snake venom VEGFs that may contribute to venom dispersion and prey subjugation by inducing vascular permeability and hypotension. This protein induces an increase in capillary permeability when intradermally injected into mice. Also provokes a drastic hypotensive effect after intravenous injection. The hypotension is mediated by nitric oxide (NO), which is produced by VEGF-activated endothelium NO synthase. Also induces angiogenesis in vitro. Unlike other crotalid VEGFs, this protein interacts with VEGF receptor-2 (KDR) with a high affinity (Kd=413 pM), whereas no interaction is detected with VEGF receptor-1 (FLT1). The sequence is that of Snake venom vascular endothelial growth factor toxin from Protobothrops jerdonii (Jerdon's pitviper).